Consider the following 551-residue polypeptide: Cleavage and polyadenylation specificity factor subunit 6 (551 aa).

The segment at 1 to 213 (MADGVDHIDI…RGRFPGAVPG (213 aa)) is necessary for interaction with NXF1. The region spanning 81–161 (IALYIGNLTW…QNPVVTPCNK (81 aa)) is the RRM domain. The segment at 81–161 (IALYIGNLTW…QNPVVTPCNK (81 aa)) is necessary for interaction with NUDT21/CPSF5. Residues 81–161 (IALYIGNLTW…QNPVVTPCNK (81 aa)) are necessary for nuclear paraspeckles localization. Phosphothreonine is present on threonine 157. The segment covering 169–180 (MQSRKTTQSGQM) has biased composition (polar residues). Disordered stretches follow at residues 169–411 (MQSR…PLSE) and 477–551 (LHGI…YRHR). Residues 202-206 (RGRGR) carry the GAR motif. Residues 207 to 219 (FPGAVPGGDRFPG) show a composition bias toward low complexity. Pro residues-rich tracts occupy residues 220-265 (PAGP…PLAG), 285-366 (GQPP…PPPT), and 377-388 (GPPPTDPYGRPP). Residues 358–551 (NPAFFPPPTN…RDREREYRHR (194 aa)) are (Microbial infection) Binds to HIV-1 capsid protein p24 (CA). The segment covering 389–404 (PYDRGDYGPPGREMDT) has biased composition (basic and acidic residues). Residues threonine 404 and threonine 407 each carry the phosphothreonine modification. The tract at residues 404 to 551 (TARTPLSEAE…RDREREYRHR (148 aa)) is sufficient for nuclear speckle localization. The tract at residues 405–551 (ARTPLSEAEF…RDREREYRHR (147 aa)) is necessary for RNA-binding. The tract at residues 481–551 (ESKSYGSGSR…RDREREYRHR (71 aa)) is necessary for interaction with SRSF3, SRSF7 and TRA2B/SFRS10. Residues 489–503 (SRRERSRERDHSRSR) are compositionally biased toward basic and acidic residues. The segment at 490–551 (RRERSRERDH…RDREREYRHR (62 aa)) is arg/Ser-rich domain. Serine 494, serine 500, serine 511, serine 513, and serine 525 each carry phosphoserine. The segment covering 504 to 514 (EKSRRHKSRSR) has biased composition (basic residues). Residues 510 to 551 (KSRSRDRHDDYYRERSRERERHRDRDRDRDRERDREREYRHR) form a sufficient for nuclear targeting region. Residues 515-551 (DRHDDYYRERSRERERHRDRDRDRDRERDREREYRHR) show a composition bias toward basic and acidic residues.

This sequence belongs to the RRM CPSF6/7 family. In terms of assembly, component of the cleavage factor Im (CFIm) complex which is a heterotetramer composed of two subunits of NUDT21/CPSF5 and two subunits of CPSF6 or CPSF7 or a heterodimer of CPSF6 and CPSF7. The cleavage factor Im (CFIm) complex associates with the CPSF and CSTF complexes to promote the assembly of the core mRNA 3'-processing machinery. Associates with the exon junction complex (EJC). Associates with the 80S ribosome particle. Interacts (via the RRM domain) with NUDT21/CPSF5; this interaction is direct and enhances binding to RNA. Interacts (via Arg/Ser-rich domain) with FIP1L1 (preferentially via unphosphorylated form and Arg/Glu/Asp-rich domain); this interaction mediates, at least in part, the interaction between the CFIm and CPSF complexes and may be inhibited by CPSF6 hyper-phosphorylation. Interacts (via N-terminus) with NXF1; this interaction is direct. Interacts with SRSF3. Interacts with SRSF7. Interacts with SNRNP70. Interacts with TRA2B/SFRS10. Interacts with UPF1. Interacts with UPF3B. Interacts with VIRMA. Interacts (via Arg/Ser-rich domain) with TNPO3; promoting nuclear import of CPSF6 independently of its phosphorylation status. Interacts with YTHDC1. As to quaternary structure, (Microbial infection) Interacts (via C-terminus) with HIV-1 capsid protein p24 (CA). Post-translationally, phosphorylated. Phosphorylated in the Arg/Ser-rich domain by SRPK1, in vitro. In terms of processing, symmetrically dimethylated on arginine residues in the GAR motif by PRMT5 in a WDR77- and CLNS1A-dependent manner. Asymmetrically dimethylated on arginine residues in the GAR motif by PRMT1.

The protein resides in the nucleus. The protein localises to the nucleoplasm. It is found in the nucleus speckle. Its subcellular location is the cytoplasm. Component of the cleavage factor Im (CFIm) complex that functions as an activator of the pre-mRNA 3'-end cleavage and polyadenylation processing required for the maturation of pre-mRNA into functional mRNAs. CFIm contributes to the recruitment of multiprotein complexes on specific sequences on the pre-mRNA 3'-end, so called cleavage and polyadenylation signals (pA signals). Most pre-mRNAs contain multiple pA signals, resulting in alternative cleavage and polyadenylation (APA) producing mRNAs with variable 3'-end formation. The CFIm complex acts as a key regulator of cleavage and polyadenylation site choice during APA through its binding to 5'-UGUA-3' elements localized in the 3'-untranslated region (UTR) for a huge number of pre-mRNAs. CPSF6 enhances NUDT21/CPSF5 binding to 5'-UGUA-3' elements localized upstream of pA signals and promotes RNA looping, and hence activates directly the mRNA 3'-processing machinery. Plays a role in mRNA export. Functionally, (Microbial infection) Binds HIV-1 capsid-nucleocapsid (HIV-1 CA-NC) complexes and might thereby promote the integration of the virus in the nucleus of dividing cells (in vitro). This Homo sapiens (Human) protein is Cleavage and polyadenylation specificity factor subunit 6.